Here is a 149-residue protein sequence, read N- to C-terminus: Ribosome maturation factor RimP (149 aa).

It belongs to the RimP family.

It is found in the cytoplasm. Functionally, required for maturation of 30S ribosomal subunits. This chain is Ribosome maturation factor RimP, found in Neisseria gonorrhoeae (strain NCCP11945).